The sequence spans 495 residues: Cobyric acid synthase (495 aa).

One can recognise a GATase cobBQ-type domain in the interval 252–440 (RPKVVVLAYP…VHGLFADDGL (189 aa)). The active-site Nucleophile is the Cys334. Residue His432 is part of the active site.

Belongs to the CobB/CobQ family. CobQ subfamily.

The protein operates within cofactor biosynthesis; adenosylcobalamin biosynthesis. Its function is as follows. Catalyzes amidations at positions B, D, E, and G on adenosylcobyrinic A,C-diamide. NH(2) groups are provided by glutamine, and one molecule of ATP is hydrogenolyzed for each amidation. This Bradyrhizobium sp. (strain ORS 278) protein is Cobyric acid synthase.